The chain runs to 1721 residues: Ras guanine nucleotide exchange factor R (1721 aa).

The stretch at 148 to 279 (QLEDEVDLVH…LQQQQQQQRS (132 aa)) forms a coiled coil. Disordered stretches follow at residues 213-232 (QQQK…KEEK), 445-515 (SSLG…NQQP), 551-701 (ATTT…VDKQ), 716-766 (RTPL…KSPS), 797-837 (TITI…TPNK), and 929-981 (DEVS…DPVS). Positions 216 to 232 (KHQEEKEKNDQKEKEEK) are enriched in basic and acidic residues. Composition is skewed to low complexity over residues 454 to 469 (SPEK…STSE), 479 to 493 (HNNN…STNN), 501 to 515 (PSLS…NQQP), and 551 to 581 (ATTT…LSIS). The span at 618–627 (NGTTSPRNNE) shows a compositional bias: polar residues. 2 stretches are compositionally biased toward low complexity: residues 628–651 (SSVT…VNTI) and 663–686 (TPTT…SQND). A compositionally biased stretch (basic and acidic residues) spans 687–701 (KQNENNNKENFVDKQ). Low complexity-rich tracts occupy residues 724–748 (SSNS…TNSS), 797–836 (TITI…TTPN), and 933–952 (ESSS…NTPS). Residues 802–831 (NNNNNNNNNNNNNNNNNNNIQQQQQQQQQI) are a coiled coil. Polar residues predominate over residues 968-978 (NLSSINNSSYD). Residues 1291–1411 (GRYVPKAGTL…ILGGLIKKKE (121 aa)) form the N-terminal Ras-GEF domain. The 230-residue stretch at 1447-1676 (NESEIARQLT…YQLSLIREPR (230 aa)) folds into the Ras-GEF domain.

Post-translationally, phosphorylated on threonine residues.

Functionally, promotes the exchange of Ras-bound GDP by GTP. May also play a role in the activation of rasG. The protein is Ras guanine nucleotide exchange factor R (gefR) of Dictyostelium discoideum (Social amoeba).